A 578-amino-acid polypeptide reads, in one-letter code: Protein O-linked-mannose beta-1,4-N-acetylglucosaminyltransferase 2 (578 aa).

The Cytoplasmic portion of the chain corresponds to 1-4; it reads MNIS. The helical; Signal-anchor for type II membrane protein transmembrane segment at 5–25 threads the bilayer; it reads AVFSALLVSIMAAVLWKHVKL. Topologically, residues 26 to 578 are lumenal; that stretch reads LDQFYVIEEE…PFAEVLVCST (553 aa). N-linked (GlcNAc...) asparagine glycosylation is found at N98, N275, N335, N451, N541, and N563. Residues 484–578 enclose the Fibronectin type-III domain; sequence RESKCQASAQ…PFAEVLVCST (95 aa).

This sequence belongs to the glycosyltransferase 61 family.

Its subcellular location is the endoplasmic reticulum membrane. The catalysed reaction is 3-O-(alpha-D-mannosyl)-L-threonyl-[protein] + UDP-N-acetyl-alpha-D-glucosamine = 3-O-(N-acetyl-beta-D-glucosaminyl-(1-&gt;4)-alpha-D-mannosyl)-L-threonyl-[protein] + UDP + H(+). It participates in protein modification; protein glycosylation. Functionally, O-linked mannose beta-1,4-N-acetylglucosaminyltransferase that transfers UDP-N-acetyl-D-glucosamine to the 4-position of the mannose to generate N-acetyl-D-glucosamine-beta-1,4-O-D-mannosylprotein. Involved in the biosynthesis of the phosphorylated O-mannosyl trisaccharide (N-acetylgalactosamine-beta-3-N-acetylglucosamine-beta-4-(phosphate-6-)mannose), a carbohydrate structure present in alpha-dystroglycan (DAG1), which is required for binding laminin G-like domain-containing extracellular proteins with high affinity. This Xenopus laevis (African clawed frog) protein is Protein O-linked-mannose beta-1,4-N-acetylglucosaminyltransferase 2 (pomgnt2).